The following is a 929-amino-acid chain: Isoleucine--tRNA ligase (929 aa).

The 'HIGH' region signature appears at 57–67 (PYANGNIHVGH). Glutamate 554 is a binding site for L-isoleucyl-5'-AMP. Residues 595-599 (KMSKS) carry the 'KMSKS' region motif. Residue lysine 598 coordinates ATP. Zn(2+)-binding residues include cysteine 888, cysteine 891, cysteine 908, and cysteine 911.

It belongs to the class-I aminoacyl-tRNA synthetase family. IleS type 1 subfamily. Monomer. Zn(2+) serves as cofactor.

Its subcellular location is the cytoplasm. The enzyme catalyses tRNA(Ile) + L-isoleucine + ATP = L-isoleucyl-tRNA(Ile) + AMP + diphosphate. Catalyzes the attachment of isoleucine to tRNA(Ile). As IleRS can inadvertently accommodate and process structurally similar amino acids such as valine, to avoid such errors it has two additional distinct tRNA(Ile)-dependent editing activities. One activity is designated as 'pretransfer' editing and involves the hydrolysis of activated Val-AMP. The other activity is designated 'posttransfer' editing and involves deacylation of mischarged Val-tRNA(Ile). This Streptococcus thermophilus (strain CNRZ 1066) protein is Isoleucine--tRNA ligase.